Consider the following 206-residue polypeptide: GTP cyclohydrolase 1 (206 aa).

3 residues coordinate Zn(2+): C95, H98, and C166.

The protein belongs to the GTP cyclohydrolase I family. As to quaternary structure, toroid-shaped homodecamer, composed of two pentamers of five dimers.

It catalyses the reaction GTP + H2O = 7,8-dihydroneopterin 3'-triphosphate + formate + H(+). It participates in cofactor biosynthesis; 7,8-dihydroneopterin triphosphate biosynthesis; 7,8-dihydroneopterin triphosphate from GTP: step 1/1. This is GTP cyclohydrolase 1 from Bartonella bacilliformis (strain ATCC 35685 / KC583 / Herrer 020/F12,63).